Here is a 557-residue protein sequence, read N- to C-terminus: T-complex protein 1 subunit eta (557 aa).

N-acetylalanine is present on A2. The segment at 529 to 557 (PKSESAQGDAAGAMGRGRGGGRGRGMRRR) is disordered. The segment covering 547–557 (GGGRGRGMRRR) has biased composition (basic residues).

The protein belongs to the TCP-1 chaperonin family. In terms of assembly, heterooligomeric complex of about 850 to 900 kDa that forms two stacked rings, 12 to 16 nm in diameter. Interacts with KNAT1.

It is found in the cytoplasm. In terms of biological role, molecular chaperone; assists the folding of proteins upon ATP hydrolysis. Known to play a role, in vitro, in the folding of actin and tubulin. This Arabidopsis thaliana (Mouse-ear cress) protein is T-complex protein 1 subunit eta.